Reading from the N-terminus, the 311-residue chain is MTKTIMLANPRGFCAGVDRAIAIVERAIELYGAPIYVRHEVVHNRFVVDDLRGKGAVFIEELKDVPPGSTLIYSAHGVPLSVRAEAEALGLTVFDATCPLVTKVHVEVKRMNKAGMEIIMIGHAGHPEVEGTMGQVDAGIYLVQTVDDVATLRVVNEDQLSYVSQTTLSVDETRDIIAALKARFPNIHSPKKDDICYATQNRQDAVKLLADQCDIVVVVGSPNSSNSNRLREVAALKGVDAYMVDNASLLEPEWFAGKRRVGVTAGASAPEVLVQAVIDRIKAFDVTQVTELPGVEESTVFALPPALRPLF.

Residue cysteine 14 participates in [4Fe-4S] cluster binding. (2E)-4-hydroxy-3-methylbut-2-enyl diphosphate contacts are provided by histidine 43 and histidine 76. Residues histidine 43 and histidine 76 each coordinate dimethylallyl diphosphate. Isopentenyl diphosphate contacts are provided by histidine 43 and histidine 76. Cysteine 98 lines the [4Fe-4S] cluster pocket. (2E)-4-hydroxy-3-methylbut-2-enyl diphosphate is bound at residue histidine 126. Histidine 126 serves as a coordination point for dimethylallyl diphosphate. An isopentenyl diphosphate-binding site is contributed by histidine 126. Residue glutamate 128 is the Proton donor of the active site. Threonine 166 contacts (2E)-4-hydroxy-3-methylbut-2-enyl diphosphate. Cysteine 196 is a [4Fe-4S] cluster binding site. Serine 224, serine 225, asparagine 226, and serine 268 together coordinate (2E)-4-hydroxy-3-methylbut-2-enyl diphosphate. Dimethylallyl diphosphate contacts are provided by serine 224, serine 225, asparagine 226, and serine 268. The isopentenyl diphosphate site is built by serine 224, serine 225, asparagine 226, and serine 268.

The protein belongs to the IspH family. [4Fe-4S] cluster serves as cofactor.

The catalysed reaction is isopentenyl diphosphate + 2 oxidized [2Fe-2S]-[ferredoxin] + H2O = (2E)-4-hydroxy-3-methylbut-2-enyl diphosphate + 2 reduced [2Fe-2S]-[ferredoxin] + 2 H(+). The enzyme catalyses dimethylallyl diphosphate + 2 oxidized [2Fe-2S]-[ferredoxin] + H2O = (2E)-4-hydroxy-3-methylbut-2-enyl diphosphate + 2 reduced [2Fe-2S]-[ferredoxin] + 2 H(+). It participates in isoprenoid biosynthesis; dimethylallyl diphosphate biosynthesis; dimethylallyl diphosphate from (2E)-4-hydroxy-3-methylbutenyl diphosphate: step 1/1. It functions in the pathway isoprenoid biosynthesis; isopentenyl diphosphate biosynthesis via DXP pathway; isopentenyl diphosphate from 1-deoxy-D-xylulose 5-phosphate: step 6/6. In terms of biological role, catalyzes the conversion of 1-hydroxy-2-methyl-2-(E)-butenyl 4-diphosphate (HMBPP) into a mixture of isopentenyl diphosphate (IPP) and dimethylallyl diphosphate (DMAPP). Acts in the terminal step of the DOXP/MEP pathway for isoprenoid precursor biosynthesis. The polypeptide is 4-hydroxy-3-methylbut-2-enyl diphosphate reductase (Chromobacterium violaceum (strain ATCC 12472 / DSM 30191 / JCM 1249 / CCUG 213 / NBRC 12614 / NCIMB 9131 / NCTC 9757 / MK)).